We begin with the raw amino-acid sequence, 157 residues long: S-ribosylhomocysteine lyase (157 aa).

Positions 60, 64, and 127 each coordinate Fe cation.

It belongs to the LuxS family. In terms of assembly, homodimer. The cofactor is Fe cation.

The enzyme catalyses S-(5-deoxy-D-ribos-5-yl)-L-homocysteine = (S)-4,5-dihydroxypentane-2,3-dione + L-homocysteine. Functionally, involved in the synthesis of autoinducer 2 (AI-2) which is secreted by bacteria and is used to communicate both the cell density and the metabolic potential of the environment. The regulation of gene expression in response to changes in cell density is called quorum sensing. Catalyzes the transformation of S-ribosylhomocysteine (RHC) to homocysteine (HC) and 4,5-dihydroxy-2,3-pentadione (DPD). This is S-ribosylhomocysteine lyase from Helicobacter acinonychis (strain Sheeba).